Reading from the N-terminus, the 331-residue chain is Glyceraldehyde-3-phosphate dehydrogenase, cytosolic (331 aa).

Residues 12 to 13, D34, and R78 each bind NAD(+); that span reads RI. Residues 149–151, T180, 209–210, and R232 each bind D-glyceraldehyde 3-phosphate; these read SCT and TG. Residue C150 is the Nucleophile of the active site. N314 contributes to the NAD(+) binding site.

Belongs to the glyceraldehyde-3-phosphate dehydrogenase family. In terms of assembly, homotetramer.

It localises to the cytoplasm. The catalysed reaction is D-glyceraldehyde 3-phosphate + phosphate + NAD(+) = (2R)-3-phospho-glyceroyl phosphate + NADH + H(+). Its pathway is carbohydrate degradation; glycolysis; pyruvate from D-glyceraldehyde 3-phosphate: step 1/5. In Trypanosoma brucei brucei, this protein is Glyceraldehyde-3-phosphate dehydrogenase, cytosolic.